A 461-amino-acid chain; its full sequence is Bifunctional protein GlmU (461 aa).

Residues 1–235 (MTDTRKQRAA…EDDLIGCDSK (235 aa)) form a pyrophosphorylase region. UDP-N-acetyl-alpha-D-glucosamine contacts are provided by residues 13 to 16 (LAAG), Lys27, Gln80, 85 to 86 (GT), 108 to 110 (YGD), Gly146, Glu161, and Asn176. Asp110 contacts Mg(2+). The interval 236–256 (ADLAEAEAIFQQKRRRALMEA) is linker. An N-acetyltransferase region spans residues 257–461 (GVTMVAPETV…ARTTDQNKKG (205 aa)). Residues Arg322 and Lys340 each coordinate UDP-N-acetyl-alpha-D-glucosamine. Catalysis depends on His352, which acts as the Proton acceptor. Residues Tyr355 and Asn366 each coordinate UDP-N-acetyl-alpha-D-glucosamine. Residues Ala369, 375–376 (NY), Ser394, Ser412, and Arg429 contribute to the acetyl-CoA site.

It in the N-terminal section; belongs to the N-acetylglucosamine-1-phosphate uridyltransferase family. This sequence in the C-terminal section; belongs to the transferase hexapeptide repeat family. In terms of assembly, homotrimer. Mg(2+) is required as a cofactor.

It is found in the cytoplasm. It carries out the reaction alpha-D-glucosamine 1-phosphate + acetyl-CoA = N-acetyl-alpha-D-glucosamine 1-phosphate + CoA + H(+). The catalysed reaction is N-acetyl-alpha-D-glucosamine 1-phosphate + UTP + H(+) = UDP-N-acetyl-alpha-D-glucosamine + diphosphate. Its pathway is nucleotide-sugar biosynthesis; UDP-N-acetyl-alpha-D-glucosamine biosynthesis; N-acetyl-alpha-D-glucosamine 1-phosphate from alpha-D-glucosamine 6-phosphate (route II): step 2/2. It functions in the pathway nucleotide-sugar biosynthesis; UDP-N-acetyl-alpha-D-glucosamine biosynthesis; UDP-N-acetyl-alpha-D-glucosamine from N-acetyl-alpha-D-glucosamine 1-phosphate: step 1/1. It participates in bacterial outer membrane biogenesis; LPS lipid A biosynthesis. Catalyzes the last two sequential reactions in the de novo biosynthetic pathway for UDP-N-acetylglucosamine (UDP-GlcNAc). The C-terminal domain catalyzes the transfer of acetyl group from acetyl coenzyme A to glucosamine-1-phosphate (GlcN-1-P) to produce N-acetylglucosamine-1-phosphate (GlcNAc-1-P), which is converted into UDP-GlcNAc by the transfer of uridine 5-monophosphate (from uridine 5-triphosphate), a reaction catalyzed by the N-terminal domain. This is Bifunctional protein GlmU from Hyphomonas neptunium (strain ATCC 15444).